Reading from the N-terminus, the 56-residue chain is Conotoxin Cal6.41a (56 aa).

Positions 1-23 (MSGSGAMLLGLLILVAMATSLDT) are cleaved as a signal peptide. 3 disulfide bridges follow: C27-C41, C33-C50, and C40-C54.

In terms of tissue distribution, expressed by the venom duct.

The protein localises to the secreted. Functionally, probable neurotoxin. The polypeptide is Conotoxin Cal6.41a (Californiconus californicus (California cone)).